A 647-amino-acid polypeptide reads, in one-letter code: Pumilio homolog 3 (647 aa).

Residues Met1–Thr10 show a composition bias toward basic residues. A disordered region spans residues Met1 to Arg123. The residue at position 33 (Lys33) is an N6-acetyllysine. Positions Pro59–Lys68 are enriched in basic residues. Residues Phe93–Arg123 are compositionally biased toward basic and acidic residues. A Nuclear localization signal motif is present at residues Lys105 to Lys117. The PUM-HD domain maps to Glu142 to Leu509. Pumilio repeat units follow at residues His176–Ala211, Lys212–His247, Ser248–Gly276, Pro288–His324, Ser325–Thr360, His361–Gly396, Gln397–Asp434, Lys435–Asp503, Lys504–His550, Pro551–Ile595, and Asn596–Ser635.

As to quaternary structure, interacts with PARP1 (via catalytic domain).

The protein resides in the nucleus. The protein localises to the nucleolus. It is found in the nucleoplasm. Its subcellular location is the chromosome. Functionally, inhibits the poly(ADP-ribosyl)ation activity of PARP1 and the degradation of PARP1 by CASP3 following genotoxic stress. Binds to double-stranded RNA or DNA without sequence specificity. Involved in development of the eye and of primordial germ cells. The protein is Pumilio homolog 3 of Rattus norvegicus (Rat).